The following is a 185-amino-acid chain: Pre-histone-like nucleoprotein (185 aa).

Ser-2 carries the N-acetylserine; by host modification. The propeptide occupies 2 to 23 (SILISPDNNTGWGLCSAGMYGG). Thr-55 is subject to Phosphothreonine; by host. Ser-172 is subject to Phosphoserine; by host. Residues 175-185 (RVPVRSRPPRS) carry the Nuclear localization signal motif.

The protein belongs to the adenoviridae histone-like nucleoprotein family. As to quaternary structure, interacts with the core-capsid bridging protein; this interaction bridges the virus core to the capsid. Interacts with host NPM1; this interaction might play a role in placing the pre-histone-like nucleoprotein on the viral DNA or regulating viral gene expression. Interacts with host HMGB1; this interaction inhibits host immune response. Post-translationally, cleaved near the N-terminus by the viral protease during virion maturation to form the mature protein.

The protein localises to the virion. Its subcellular location is the host nucleus. It is found in the host nucleolus. Plays a role in the inhibition of host immune response within the nucleus. Interacts with cellular nucleosomes and immobilizes the host immune danger signal HMGB1 on chromatin. In turn, prevents HMGB1 release out of the cell and thus decreases inflammation. Also plays a role in the wrapping and condensation of the viral DNA. May also promote viral genome import into the nucleus. The polypeptide is Pre-histone-like nucleoprotein (Human adenovirus F serotype 40 (HAdV-40)).